The chain runs to 429 residues: Enolase (429 aa).

Gln162 contributes to the (2R)-2-phosphoglycerate binding site. The active-site Proton donor is Glu204. Residues Asp241, Glu286, and Asp313 each coordinate Mg(2+). Residues Lys338, Arg367, Ser368, and Lys389 each coordinate (2R)-2-phosphoglycerate. Residue Lys338 is the Proton acceptor of the active site.

It belongs to the enolase family. It depends on Mg(2+) as a cofactor.

It is found in the cytoplasm. It localises to the secreted. The protein localises to the cell surface. It catalyses the reaction (2R)-2-phosphoglycerate = phosphoenolpyruvate + H2O. The protein operates within carbohydrate degradation; glycolysis; pyruvate from D-glyceraldehyde 3-phosphate: step 4/5. Its function is as follows. Catalyzes the reversible conversion of 2-phosphoglycerate (2-PG) into phosphoenolpyruvate (PEP). It is essential for the degradation of carbohydrates via glycolysis. The sequence is that of Enolase from Shouchella clausii (strain KSM-K16) (Alkalihalobacillus clausii).